Here is a 175-residue protein sequence, read N- to C-terminus: NADH-ubiquinone oxidoreductase chain 6 (175 aa).

The next 5 membrane-spanning stretches (helical) occupy residues 1–21, 25–45, 47–67, 88–108, and 149–169; these read MMLY…VGFS, SPIY…GIVL, FGGS…MMVV, AVLG…YYVL, and YGTW…VVIM.

It belongs to the complex I subunit 6 family. In terms of assembly, core subunit of respiratory chain NADH dehydrogenase (Complex I) which is composed of 45 different subunits.

It localises to the mitochondrion inner membrane. The catalysed reaction is a ubiquinone + NADH + 5 H(+)(in) = a ubiquinol + NAD(+) + 4 H(+)(out). Its function is as follows. Core subunit of the mitochondrial membrane respiratory chain NADH dehydrogenase (Complex I) which catalyzes electron transfer from NADH through the respiratory chain, using ubiquinone as an electron acceptor. Essential for the catalytic activity and assembly of complex I. The chain is NADH-ubiquinone oxidoreductase chain 6 (MT-ND6) from Bos indicus (Zebu).